A 374-amino-acid chain; its full sequence is Probable phosphoserine aminotransferase (374 aa).

Arginine 48 is an L-glutamate binding site. Residues 82–83 (AS), tryptophan 110, threonine 160, aspartate 183, and glutamine 206 each bind pyridoxal 5'-phosphate. Lysine 207 is subject to N6-(pyridoxal phosphate)lysine. 248–249 (NT) contacts pyridoxal 5'-phosphate.

This sequence belongs to the class-V pyridoxal-phosphate-dependent aminotransferase family. SerC subfamily. In terms of assembly, homodimer. It depends on pyridoxal 5'-phosphate as a cofactor.

It carries out the reaction O-phospho-L-serine + 2-oxoglutarate = 3-phosphooxypyruvate + L-glutamate. It catalyses the reaction 4-(phosphooxy)-L-threonine + 2-oxoglutarate = (R)-3-hydroxy-2-oxo-4-phosphooxybutanoate + L-glutamate. Its pathway is amino-acid biosynthesis; L-serine biosynthesis; L-serine from 3-phospho-D-glycerate: step 2/3. The protein operates within cofactor biosynthesis; pyridoxine 5'-phosphate biosynthesis; pyridoxine 5'-phosphate from D-erythrose 4-phosphate: step 3/5. Its function is as follows. Catalyzes the reversible conversion of 3-phosphohydroxypyruvate to phosphoserine and of 3-hydroxy-2-oxo-4-phosphonooxybutanoate to phosphohydroxythreonine. The sequence is that of Probable phosphoserine aminotransferase (serC) from Dictyostelium discoideum (Social amoeba).